The chain runs to 197 residues: Phosphoheptose isomerase (197 aa).

Positions 36–197 constitute an SIS domain; that stretch reads MVNALLNEGK…IDSQLFGSEE (162 aa). Residue 51 to 53 coordinates substrate; it reads NGG. Zn(2+) contacts are provided by His-60 and Glu-64. Residues Glu-64, 93–94, 119–121, Ser-124, and Gln-174 each bind substrate; these read ND and STS. The Zn(2+) site is built by Gln-174 and His-182.

Belongs to the SIS family. GmhA subfamily. Homotetramer. Zn(2+) serves as cofactor.

It is found in the cytoplasm. The enzyme catalyses 2 D-sedoheptulose 7-phosphate = D-glycero-alpha-D-manno-heptose 7-phosphate + D-glycero-beta-D-manno-heptose 7-phosphate. It participates in carbohydrate biosynthesis; D-glycero-D-manno-heptose 7-phosphate biosynthesis; D-glycero-alpha-D-manno-heptose 7-phosphate and D-glycero-beta-D-manno-heptose 7-phosphate from sedoheptulose 7-phosphate: step 1/1. Catalyzes the isomerization of sedoheptulose 7-phosphate in D-glycero-D-manno-heptose 7-phosphate. The polypeptide is Phosphoheptose isomerase (Pseudomonas putida (strain W619)).